The chain runs to 453 residues: Bifunctional protein GlmU (453 aa).

A pyrophosphorylase region spans residues 1-226 (MVAIAILAAG…YEEILGINDR (226 aa)). UDP-N-acetyl-alpha-D-glucosamine is bound by residues 7–10 (LAAG), lysine 21, glutamine 73, and 78–79 (GT). Aspartate 103 contributes to the Mg(2+) binding site. Positions 140, 155, 170, and 224 each coordinate UDP-N-acetyl-alpha-D-glucosamine. Asparagine 224 serves as a coordination point for Mg(2+). The segment at 227–247 (KQLALAYQILQNRIKDQAMAA) is linker. The segment at 248–453 (GVTLIDPDSI…GWRLKQPDPT (206 aa)) is N-acetyltransferase. Arginine 329 and lysine 347 together coordinate UDP-N-acetyl-alpha-D-glucosamine. The Proton acceptor role is filled by histidine 359. UDP-N-acetyl-alpha-D-glucosamine contacts are provided by tyrosine 362 and asparagine 373. Residues alanine 376, 382-383 (NY), serine 401, alanine 419, and arginine 436 each bind acetyl-CoA.

It in the N-terminal section; belongs to the N-acetylglucosamine-1-phosphate uridyltransferase family. This sequence in the C-terminal section; belongs to the transferase hexapeptide repeat family. As to quaternary structure, homotrimer. Mg(2+) serves as cofactor.

It localises to the cytoplasm. It catalyses the reaction alpha-D-glucosamine 1-phosphate + acetyl-CoA = N-acetyl-alpha-D-glucosamine 1-phosphate + CoA + H(+). The catalysed reaction is N-acetyl-alpha-D-glucosamine 1-phosphate + UTP + H(+) = UDP-N-acetyl-alpha-D-glucosamine + diphosphate. The protein operates within nucleotide-sugar biosynthesis; UDP-N-acetyl-alpha-D-glucosamine biosynthesis; N-acetyl-alpha-D-glucosamine 1-phosphate from alpha-D-glucosamine 6-phosphate (route II): step 2/2. It participates in nucleotide-sugar biosynthesis; UDP-N-acetyl-alpha-D-glucosamine biosynthesis; UDP-N-acetyl-alpha-D-glucosamine from N-acetyl-alpha-D-glucosamine 1-phosphate: step 1/1. Its pathway is bacterial outer membrane biogenesis; LPS lipid A biosynthesis. Functionally, catalyzes the last two sequential reactions in the de novo biosynthetic pathway for UDP-N-acetylglucosamine (UDP-GlcNAc). The C-terminal domain catalyzes the transfer of acetyl group from acetyl coenzyme A to glucosamine-1-phosphate (GlcN-1-P) to produce N-acetylglucosamine-1-phosphate (GlcNAc-1-P), which is converted into UDP-GlcNAc by the transfer of uridine 5-monophosphate (from uridine 5-triphosphate), a reaction catalyzed by the N-terminal domain. This chain is Bifunctional protein GlmU, found in Cyanothece sp. (strain PCC 7425 / ATCC 29141).